We begin with the raw amino-acid sequence, 204 residues long: MSKVKVLNEKLEKASELELPANFADVNPHNLYLYVKSYLASLRANTANTKGRSEVSGGGKKPWRQKGRGGARAGSTRTNVWVGGAVAFGPTNNRNYFQKVNKKQKRLALEFALNEKAQNDKIFAVDSLEISSGKTKDAAKFIKNLGVRDALIVKNELDSATLLAYRNLNNCYVIDINELNAYLVAVYSAVIIETSALQSIVKEG.

A disordered region spans residues 49-75 (TKGRSEVSGGGKKPWRQKGRGGARAGS).

Belongs to the universal ribosomal protein uL4 family. In terms of assembly, part of the 50S ribosomal subunit.

In terms of biological role, one of the primary rRNA binding proteins, this protein initially binds near the 5'-end of the 23S rRNA. It is important during the early stages of 50S assembly. It makes multiple contacts with different domains of the 23S rRNA in the assembled 50S subunit and ribosome. Its function is as follows. Forms part of the polypeptide exit tunnel. This Campylobacter hominis (strain ATCC BAA-381 / DSM 21671 / CCUG 45161 / LMG 19568 / NCTC 13146 / CH001A) protein is Large ribosomal subunit protein uL4.